A 745-amino-acid chain; its full sequence is MVPGSEGPARAGGLVADVVFVIEGTANLGPYFEELRKHYLLPAIEYFNGGPPAETDFGGDYGGTQYSLVVFNTVDCAPESYVQCHAPTSSAYEFVTWLDGIKFMGGGGESCSLIAEGLSTALQLFDDFKKMREQIGQTHRVCLLICNSPPYLLPAVESTTYSGCTTESLVQKIGERGIHFSIVSPRKLPALRLLFEKAAPPALLEPLQQPADVSQDPRHMVLVRGLVLPVGGSSTSGSLQTKQAVPLPPAPASAATLSAAPPQALPPVPPQYQVPGNLSAAQVAAQNAVEAAKSQKAGLGPRFSPINPLQQAAPGVGPPFSQAPAPPLAPVPPGAPKPPPASQPSLVSTVAPGPVLAAPAQPGAPSLAGTVTPGGVNGPSAAQLGGPALGGQQSVSNKLLAWSGVLEWQEKPKPASVDANTKLTRSLPCQVYVNHGENLKTEQWPQKLIMQLIPQQLLTTLGPLFRNSRMVQFHFTNKDLESLKGLYRIMGNGFAGCVHFPHTAPCEVRVLMLLYSSKKKIFMGLIPYDQSGFVNGIRQVITNHKQVQQQKLEQQRGMGAQQAPPVLGPILEEQARPPQNLLQLRAPQPQPQGAVGASAATGQPQPQGATQAPTGAPQGPPGAAPGPPPSGPILRPQNPGANPQLRSLLLNPAPPQTGVPPPQASLHHLQPPGAPTLLPPHQSMGQPQLGPQLLHPPPAQSWPTQLPQRAPLPGQMLLSGGPRGPVPQPGLQPSVMEDDILMDLI.

The segment at 1–226 (MVPGSEGPAR…PRHMVLVRGL (226 aa)) is interaction with the Mediator complex. The span at 233–243 (SSTSGSLQTKQ) shows a compositional bias: polar residues. 2 disordered regions span residues 233 to 266 (SSTSGSLQTKQAVPLPPAPASAATLSAAPPQALP) and 299 to 374 (LGPR…VTPG). The segment covering 252–262 (ASAATLSAAPP) has biased composition (low complexity). Residues 324 to 342 (PAPPLAPVPPGAPKPPPAS) show a composition bias toward pro residues. An interaction with VP16 region spans residues 389–543 (LGGQQSVSNK…VNGIRQVITN (155 aa)). An interaction with CREBBP region spans residues 395–545 (VSNKLLAWSG…GIRQVITNHK (151 aa)). Interaction with RARA regions lie at residues 563–652 (APPV…LLNP) and 639–705 (PGAN…WPTQ). The interval 584-738 (LRAPQPQPQG…PGLQPSVMED (155 aa)) is disordered. Residues 596–617 (GASAATGQPQPQGATQAPTGAP) show a composition bias toward low complexity. Residues 618-631 (QGPPGAAPGPPPSG) show a composition bias toward pro residues. Residues 645–649 (LRSLL) carry the LXXLL motif motif. The span at 652–663 (PAPPQTGVPPPQ) shows a compositional bias: pro residues. Arg-723 carries the asymmetric dimethylarginine modification.

Belongs to the Mediator complex subunit 25 family. In terms of assembly, component of the Mediator complex, which is composed of MED1, MED4, MED6, MED7, MED8, MED9, MED10, MED11, MED12, MED13, MED13L, MED14, MED15, MED16, MED17, MED18, MED19, MED20, MED21, MED22, MED23, MED24, MED25, MED26, MED27, MED29, MED30, MED31, CCNC, CDK8 and CDC2L6/CDK11. The MED12, MED13, CCNC and CDK8 subunits form a distinct module termed the CDK8 module. Mediator containing the CDK8 module is less active than Mediator lacking this module in supporting transcriptional activation. Individual preparations of the Mediator complex lacking one or more distinct subunits have been variously termed ARC, CRSP, DRIP, PC2, SMCC and TRAP. Interacts with CREBBP. Interacts with ESR1, GR and THRB in a ligand-dependent fashion. Binds the Herpes simplex virus activator VP16. Interacts with RARA and RXRA in a ligand-dependent fashion.

It localises to the nucleus. Component of the Mediator complex, a coactivator involved in the regulated transcription of nearly all RNA polymerase II-dependent genes. Mediator functions as a bridge to convey information from gene-specific regulatory proteins to the basal RNA polymerase II transcription machinery. Mediator is recruited to promoters by direct interactions with regulatory proteins and serves as a scaffold for the assembly of a functional preinitiation complex with RNA polymerase II and the general transcription factors. Required for RARA/RXRA-mediated transcription. This chain is Mediator of RNA polymerase II transcription subunit 25 (Med25), found in Mus musculus (Mouse).